Consider the following 240-residue polypeptide: UDP-2,3-diacylglucosamine hydrolase (240 aa).

5 residues coordinate Mn(2+): aspartate 8, histidine 10, aspartate 41, asparagine 79, and histidine 114. Residue asparagine 79–arginine 80 participates in substrate binding. Residues aspartate 122, serine 160, asparagine 164, lysine 167, and histidine 195 each contribute to the substrate site. 2 residues coordinate Mn(2+): histidine 195 and histidine 197.

The protein belongs to the LpxH family. Mn(2+) is required as a cofactor.

It localises to the cell inner membrane. It carries out the reaction UDP-2-N,3-O-bis[(3R)-3-hydroxytetradecanoyl]-alpha-D-glucosamine + H2O = 2-N,3-O-bis[(3R)-3-hydroxytetradecanoyl]-alpha-D-glucosaminyl 1-phosphate + UMP + 2 H(+). It functions in the pathway glycolipid biosynthesis; lipid IV(A) biosynthesis; lipid IV(A) from (3R)-3-hydroxytetradecanoyl-[acyl-carrier-protein] and UDP-N-acetyl-alpha-D-glucosamine: step 4/6. Functionally, hydrolyzes the pyrophosphate bond of UDP-2,3-diacylglucosamine to yield 2,3-diacylglucosamine 1-phosphate (lipid X) and UMP by catalyzing the attack of water at the alpha-P atom. Involved in the biosynthesis of lipid A, a phosphorylated glycolipid that anchors the lipopolysaccharide to the outer membrane of the cell. The polypeptide is UDP-2,3-diacylglucosamine hydrolase (Escherichia coli O81 (strain ED1a)).